The chain runs to 145 residues: Leghemoglobin-1 (145 aa).

One can recognise a Globin domain in the interval 3 to 145 (AFSDKQEALV…ELAAAIKKAY (143 aa)). 2 positions are modified to nitrated tyrosine: Tyr26 and Tyr31. Ser46 serves as a coordination point for heme b. Position 46 is a phosphoserine (Ser46). His62 is an O2 binding site. Heme b is bound by residues Lys65, His93, and Lys96. Tyr134 is subject to Nitrated tyrosine.

This sequence belongs to the plant globin family. In terms of assembly, monomer. Post-translationally, nitrated in effective nodules and particularly in hypoxic conditions; this mechanism may play a protective role in the symbiosis by buffering toxic peroxynitrite NO(2)(-). Nitration level decrease during nodule senescence. Phosphorylation at Ser-46 disrupts the molecular environment of its porphyrin ring oxygen binding pocket, thus leading to a reduced oxygen consumption and to the delivery of oxygen O(2) to symbiosomes. In terms of tissue distribution, root nodules.

Its subcellular location is the cytoplasm. It is found in the cytosol. The protein resides in the nucleus. Leghemoglobin that reversibly binds oxygen O(2) through a pentacoordinated heme iron. In root nodules, facilitates the diffusion of oxygen to the bacteroids while preventing the bacterial nitrogenase from being inactivated by buffering dioxygen, nitric oxide and carbon monoxide, and promoting the formation of reactive oxygen species (ROS, e.g. H(2)O(2)). This role is essential for symbiotic nitrogen fixation (SNF). This Vigna unguiculata (Cowpea) protein is Leghemoglobin-1.